Reading from the N-terminus, the 163-residue chain is Putative 4-hydroxy-4-methyl-2-oxoglutarate aldolase (163 aa).

Substrate-binding positions include 76 to 79 (GDML) and arginine 98. Aspartate 99 serves as a coordination point for a divalent metal cation.

Belongs to the class II aldolase/RraA-like family. In terms of assembly, homotrimer. Requires a divalent metal cation as cofactor.

It catalyses the reaction 4-hydroxy-4-methyl-2-oxoglutarate = 2 pyruvate. The enzyme catalyses oxaloacetate + H(+) = pyruvate + CO2. Functionally, catalyzes the aldol cleavage of 4-hydroxy-4-methyl-2-oxoglutarate (HMG) into 2 molecules of pyruvate. Also contains a secondary oxaloacetate (OAA) decarboxylase activity due to the common pyruvate enolate transition state formed following C-C bond cleavage in the retro-aldol and decarboxylation reactions. In Pseudomonas putida (strain GB-1), this protein is Putative 4-hydroxy-4-methyl-2-oxoglutarate aldolase.